Here is a 347-residue protein sequence, read N- to C-terminus: Heat-inducible transcription repressor HrcA (347 aa).

Belongs to the HrcA family.

Its function is as follows. Negative regulator of class I heat shock genes (grpE-dnaK-dnaJ and groELS operons). Prevents heat-shock induction of these operons. This is Heat-inducible transcription repressor HrcA from Lactococcus lactis subsp. cremoris (strain SK11).